We begin with the raw amino-acid sequence, 83 residues long: Small ribosomal subunit protein uS17c (83 aa).

It belongs to the universal ribosomal protein uS17 family. In terms of assembly, part of the 30S ribosomal subunit.

It is found in the plastid. The protein resides in the chloroplast. In terms of biological role, one of the primary rRNA binding proteins, it binds specifically to the 5'-end of 16S ribosomal RNA. In Pyropia yezoensis (Susabi-nori), this protein is Small ribosomal subunit protein uS17c (rps17).